A 193-amino-acid chain; its full sequence is dTTP/UTP pyrophosphatase (193 aa).

Catalysis depends on D75, which acts as the Proton acceptor.

It belongs to the Maf family. YhdE subfamily. It depends on a divalent metal cation as a cofactor.

Its subcellular location is the cytoplasm. The enzyme catalyses dTTP + H2O = dTMP + diphosphate + H(+). It catalyses the reaction UTP + H2O = UMP + diphosphate + H(+). Functionally, nucleoside triphosphate pyrophosphatase that hydrolyzes dTTP and UTP. May have a dual role in cell division arrest and in preventing the incorporation of modified nucleotides into cellular nucleic acids. This Chlorobium luteolum (strain DSM 273 / BCRC 81028 / 2530) (Pelodictyon luteolum) protein is dTTP/UTP pyrophosphatase.